We begin with the raw amino-acid sequence, 165 residues long: Pyruvoyl-dependent arginine decarboxylase 1 (165 aa).

Ser-45 carries the pyruvic acid (Ser) modification.

The protein belongs to the PdaD family. It depends on pyruvate as a cofactor.

The enzyme catalyses L-arginine + H(+) = agmatine + CO2. The polypeptide is Pyruvoyl-dependent arginine decarboxylase 1 (pdaD1) (Methanosarcina mazei (strain ATCC BAA-159 / DSM 3647 / Goe1 / Go1 / JCM 11833 / OCM 88) (Methanosarcina frisia)).